The primary structure comprises 350 residues: GTPase Obg (350 aa).

Positions 1-159 (MKLVDEAEIE…RTLKLELKLL (159 aa)) constitute an Obg domain. The segment at 126–147 (GNMHFKSSTNRSPRQALPGEPG) is disordered. The OBG-type G domain maps to 160 to 337 (ADVGLLGFPN…IMSRIMAFFD (178 aa)). Residues 166–173 (GFPNAGKS), 191–195 (FTTLY), 213–216 (DIPG), 287–290 (NKAD), and 318–320 (SAL) each bind GTP. Mg(2+) contacts are provided by Ser173 and Thr193.

It belongs to the TRAFAC class OBG-HflX-like GTPase superfamily. OBG GTPase family. As to quaternary structure, monomer. Mg(2+) serves as cofactor.

Its subcellular location is the cytoplasm. Its function is as follows. An essential GTPase which binds GTP, GDP and possibly (p)ppGpp with moderate affinity, with high nucleotide exchange rates and a fairly low GTP hydrolysis rate. Plays a role in control of the cell cycle, stress response, ribosome biogenesis and in those bacteria that undergo differentiation, in morphogenesis control. This chain is GTPase Obg, found in Stenotrophomonas maltophilia (strain K279a).